Consider the following 709-residue polypeptide: Septu protein PtuA (709 aa).

Functionally, component of antiviral defense system Septu type II, composed of PtuA and PtuB. Expression of Septu type II in B.subtilis (strain BEST7003) confers resistance to phages SBSphiC and SpBeta. May be an ATPase. In Bacillus mycoides (strain KBAB4) (Bacillus weihenstephanensis), this protein is Septu protein PtuA.